The chain runs to 36 residues: Collagen alpha-2(I) chain (36 aa).

Residues 1-36 (GSNGEPGSAGPPGPAGLRGLPGESGAVGPAGPPGSR) form a disordered region. Residues proline 6 and proline 12 each carry the 4-hydroxyproline modification. Residues 15–29 (AGLRGLPGESGAVGP) show a composition bias toward low complexity. Residue proline 33 is modified to 4-hydroxyproline.

This sequence belongs to the fibrillar collagen family. Trimers of one alpha 2(I) and two alpha 1(I) chains. Proline residues at the third position of the tripeptide repeating unit (G-X-Y) are hydroxylated in some or all of the chains.

It localises to the secreted. Its subcellular location is the extracellular space. The protein resides in the extracellular matrix. Functionally, type I collagen is a member of group I collagen (fibrillar forming collagen). The polypeptide is Collagen alpha-2(I) chain (Brachylophosaurus canadensis (Campanian hadrosaur)).